The primary structure comprises 334 residues: MALTMLLLLVAAALTLIETRAGQHSLQYFHTAVSRPGLGEPWFISVGYVDDTQFVRFDSDAENPRMEPRARWMEQEGPEYWERETQIAKGHEQSFRGSLRTAQSYYNQSKGGSHTLQWMYGCDMGSDGRLLRGYLQFAYEGRDYIALNEDLKTWTAVDMAAQITRRKWEQAGIAEKDQAYLEGTCMQSLRRYLQLGKETLLRTDPPKAHVTHHPRSYGAVTLRCWALGFYPADITLTWQLNGEELTQDMELVETRPAGDGTFQKWASVVVPLGKEQNYTCHVNHEGLPEPLTLRWGRWEPPPYTVSNMATIAVVVDLGAVAIIGAVVAFVMNRR.

Positions 1-21 are cleaved as a signal peptide; sequence MALTMLLLLVAAALTLIETRA. Residues 22-111 form an alpha-1 region; sequence GQHSLQYFHT…AQSYYNQSKG (90 aa). The Extracellular portion of the chain corresponds to 22–310; sequence GQHSLQYFHT…PPYTVSNMAT (289 aa). Residue asparagine 107 is glycosylated (N-linked (GlcNAc...) asparagine). An alpha-2 region spans residues 112–203; it reads GSHTLQWMYG…QLGKETLLRT (92 aa). 2 cysteine pairs are disulfide-bonded: cysteine 122–cysteine 185 and cysteine 224–cysteine 280. The segment at 204 to 295 is alpha-3; that stretch reads DPPKAHVTHH…GLPEPLTLRW (92 aa). An Ig-like C1-type domain is found at 206 to 294; it reads PKAHVTHHPR…EGLPEPLTLR (89 aa). Asparagine 277 carries an N-linked (GlcNAc...) asparagine glycan. The segment at 296–310 is connecting peptide; that stretch reads GRWEPPPYTVSNMAT. A helical membrane pass occupies residues 311-332; the sequence is IAVVVDLGAVAIIGAVVAFVMN.

Belongs to the MHC class I family. As to quaternary structure, heterodimer of an alpha chain and a beta chain (beta-2-microglobulin).

It is found in the membrane. Involved in the presentation of foreign antigens to the immune system. This chain is H-2 class I histocompatibility antigen, Q7 alpha chain (H2-Q7), found in Mus musculus (Mouse).